The chain runs to 162 residues: Cytochrome c-type biogenesis protein CcmE (162 aa).

Residues 1–13 (MSFWPQSRKARRR) are Cytoplasmic-facing. The helical; Signal-anchor for type II membrane protein transmembrane segment at 14–34 (LTILLAIAPVLALAVGLALYG) threads the bilayer. The Periplasmic segment spans residues 35-162 (LRDSISLFYT…DAPAYGSQKP (128 aa)). Residues histidine 128 and tyrosine 132 each coordinate heme. Basic and acidic residues predominate over residues 140 to 151 (ALKEQGEWRGEG). Positions 140 to 162 (ALKEQGEWRGEGADAPAYGSQKP) are disordered.

The protein belongs to the CcmE/CycJ family.

Its subcellular location is the cell inner membrane. Functionally, heme chaperone required for the biogenesis of c-type cytochromes. Transiently binds heme delivered by CcmC and transfers the heme to apo-cytochromes in a process facilitated by CcmF and CcmH. The chain is Cytochrome c-type biogenesis protein CcmE from Caulobacter vibrioides (strain ATCC 19089 / CIP 103742 / CB 15) (Caulobacter crescentus).